The primary structure comprises 338 residues: 1-aminocyclopropane-1-carboxylate deaminase (338 aa).

Lys-51 carries the post-translational modification N6-(pyridoxal phosphate)lysine. The active-site Nucleophile is the Ser-78.

Belongs to the ACC deaminase/D-cysteine desulfhydrase family. As to quaternary structure, homotrimer. Pyridoxal 5'-phosphate is required as a cofactor.

It catalyses the reaction 1-aminocyclopropane-1-carboxylate + H2O = 2-oxobutanoate + NH4(+). Functionally, catalyzes a cyclopropane ring-opening reaction, the irreversible conversion of 1-aminocyclopropane-1-carboxylate (ACC) to ammonia and alpha-ketobutyrate. Allows growth on ACC as a nitrogen source. The protein is 1-aminocyclopropane-1-carboxylate deaminase of Burkholderia pseudomallei (strain 1106a).